Consider the following 86-residue polypeptide: Translation initiation factor IF-1 2 (86 aa).

An S1-like domain is found at 1–72 (MAKEELLEME…SKGRITFRHI (72 aa)).

The protein belongs to the IF-1 family. As to quaternary structure, component of the 30S ribosomal translation pre-initiation complex which assembles on the 30S ribosome in the order IF-2 and IF-3, IF-1 and N-formylmethionyl-tRNA(fMet); mRNA recruitment can occur at any time during PIC assembly.

It is found in the cytoplasm. Its function is as follows. One of the essential components for the initiation of protein synthesis. Stabilizes the binding of IF-2 and IF-3 on the 30S subunit to which N-formylmethionyl-tRNA(fMet) subsequently binds. Helps modulate mRNA selection, yielding the 30S pre-initiation complex (PIC). Upon addition of the 50S ribosomal subunit IF-1, IF-2 and IF-3 are released leaving the mature 70S translation initiation complex. The protein is Translation initiation factor IF-1 2 of Polynucleobacter asymbioticus (strain DSM 18221 / CIP 109841 / QLW-P1DMWA-1) (Polynucleobacter necessarius subsp. asymbioticus).